The sequence spans 401 residues: MNRKELEKLGFASKQIHAGSIKNKYGALATPIYQTSTFAFDSAEQGGRRFALEEEGYIYTRLGNPTTTVVEEKLACLENGEACMSASSGIGAVTSCIWSIVNAGDHIVAGKTLYGCTFAFLNHGLSRFGVDVTFVDTRDPENVKKALKPNTKIVYLETPANPNMYLCDIAAVSKIAHAHNPECKVIVDNTYMTPYLQRPLDLGADVVLHSATKYLNGHGDVIAGFVVGKKEFIDQVRFVGVKDMTGSTLGPFEAYLIGRGMKTLDIRMEKHCANAQKVAEFLEKHPAVESIAFPGLKSFPQYELAKKQMKLCGAMIAFTVKGGLEAGKTLINSVKFATIAVSLGDAETLIQHPASMTHSPYTPEERAASDIAEGLVRLSVGLEDAEDIIADLKQALDKLVK.

Pyridoxal 5'-phosphate contacts are provided by residues Y59–R61 and G89–I90. Y114 is a binding site for substrate. S210–T212 lines the pyridoxal 5'-phosphate pocket. K213 carries the post-translational modification N6-(pyridoxal phosphate)lysine. R377 contacts substrate.

It belongs to the trans-sulfuration enzymes family. L-methionine gamma-lyase subfamily. As to quaternary structure, homotetramer; dimer of active dimers. Pyridoxal 5'-phosphate serves as cofactor.

It carries out the reaction L-methionine + H2O = methanethiol + 2-oxobutanoate + NH4(+). The enzyme catalyses L-homocysteine + H2O = 2-oxobutanoate + hydrogen sulfide + NH4(+) + H(+). Catalyzes the alpha,gamma-elimination of L-methionine to produce methanethiol, 2-oxobutanoate and ammonia; methanethiol (methyl mercaptan) is considered to be one of the main causes of the oral malodor associated with periodontitis and may also play a role in the pathogenicity of T.denticola. Also displays homocysteine desulfhydrase activity, degrading homocysteine to produce hydrogen sulfide, 2-oxobutanoate and ammonia. This chain is L-methionine gamma-lyase, found in Treponema denticola (strain ATCC 35405 / DSM 14222 / CIP 103919 / JCM 8153 / KCTC 15104).